A 199-amino-acid chain; its full sequence is MSNTEQHQKKGQKNKVLLNNDIPFSKVFLIGEDGEKIGIKTKEEALDIARGEKKDLVLISVQPKPIARILDYGKFKYDRKKKEKEQKEKQTNINNRQIRLTPLIGDHDLLTKAKKTRELLLKGDRIKVSLKFKGREIARKELGIDTLNRFYEQVEDIAKIDKEPKLNQDRFLDMYLHPDKQKIAKYLKEKGEDNAKNEK.

This sequence belongs to the IF-3 family. Monomer.

It localises to the cytoplasm. Functionally, IF-3 binds to the 30S ribosomal subunit and shifts the equilibrium between 70S ribosomes and their 50S and 30S subunits in favor of the free subunits, thus enhancing the availability of 30S subunits on which protein synthesis initiation begins. This is Translation initiation factor IF-3 from Mycoplasmopsis pulmonis (strain UAB CTIP) (Mycoplasma pulmonis).